A 95-amino-acid polypeptide reads, in one-letter code: Co-chaperonin GroES (95 aa).

This sequence belongs to the GroES chaperonin family. As to quaternary structure, heptamer of 7 subunits arranged in a ring. Interacts with the chaperonin GroEL.

Its subcellular location is the cytoplasm. In terms of biological role, together with the chaperonin GroEL, plays an essential role in assisting protein folding. The GroEL-GroES system forms a nano-cage that allows encapsulation of the non-native substrate proteins and provides a physical environment optimized to promote and accelerate protein folding. GroES binds to the apical surface of the GroEL ring, thereby capping the opening of the GroEL channel. In Rickettsia canadensis (strain McKiel), this protein is Co-chaperonin GroES.